The primary structure comprises 664 residues: Alcohol oxidase (664 aa).

8–39 (DIIVVGGGSTGCCIAGRLANLDDQNLTVALIE) is an FAD binding site. Histidine 568 (proton acceptor) is an active-site residue. The Microbody targeting signal signature appears at 662 to 664 (ARF).

Belongs to the GMC oxidoreductase family. As to quaternary structure, homooctamer. It depends on FAD as a cofactor.

It localises to the peroxisome matrix. It catalyses the reaction a primary alcohol + O2 = an aldehyde + H2O2. Its pathway is energy metabolism; methane degradation. Functionally, catalyzes the oxidation of methanol to formaldehyde and hydrogen peroxide, the first step in the methanol utilization pathway of methylotrophic yeasts. This Pichia angusta (Yeast) protein is Alcohol oxidase (MOX).